Consider the following 349-residue polypeptide: Aldehyde reductase YahK (349 aa).

Cysteine 40, histidine 62, cysteine 93, cysteine 96, cysteine 99, cysteine 107, and cysteine 158 together coordinate Zn(2+).

The protein belongs to the zinc-containing alcohol dehydrogenase family. The cofactor is Zn(2+).

The catalysed reaction is a primary alcohol + NADP(+) = an aldehyde + NADPH + H(+). In terms of biological role, catalyzes the reduction of a wide range of aldehydes into their corresponding alcohols. Has a strong preference for NADPH over NADH as the electron donor. Cannot use a ketone as substrate. Is a major source of NADPH-dependent aldehyde reductase activity in E.coli. The in vivo functions of YahK has yet to be determined. The polypeptide is Aldehyde reductase YahK (yahK) (Escherichia coli (strain K12)).